An 86-amino-acid polypeptide reads, in one-letter code: Cytochrome c6 (86 aa).

Heme c is bound by residues Cys14, Cys17, His18, and Met58.

This sequence belongs to the cytochrome c family. PetJ subfamily. Monomer. Post-translationally, binds 1 heme c group covalently per subunit.

It is found in the plastid. The protein resides in the chloroplast thylakoid lumen. Its function is as follows. Functions as an electron carrier between membrane-bound cytochrome b6-f and photosystem I in oxygenic photosynthesis. This is Cytochrome c6 (petJ) from Bumilleriopsis filiformis (Yellow-green alga).